A 239-amino-acid polypeptide reads, in one-letter code: Small ribosomal subunit protein uS2 (239 aa).

This sequence belongs to the universal ribosomal protein uS2 family.

This chain is Small ribosomal subunit protein uS2, found in Synechococcus sp. (strain WH7803).